The chain runs to 999 residues: Collagen alpha-1(I) chain (999 aa).

The tract at residues 1–999 (SYGYDEKSAG…PGPPGPPGPP (999 aa)) is disordered. K7 carries the post-translational modification Allysine. S8 bears the Phosphoserine mark. A 4-hydroxyproline mark is found at P27, P30, P33, P42, P45, P48, P62, P77, P83, P92, and P98. The span at 65–79 (NGDDGEAGKPGRPGE) shows a compositional bias: basic and acidic residues. K101 bears the 5-hydroxylysine; alternate mark. O-linked (Gal...) hydroxylysine; alternate glycosylation is present at K101. At S107 the chain carries Phosphoserine. Low complexity predominate over residues 115–131 (DAGPAGPKGEPGSPGEN). 16 positions are modified to 4-hydroxyproline: P125, P128, P134, P143, P149, P170, P179, P182, P209, P212, P224, P230, P239, P245, P248, and P263. A compositionally biased stretch (low complexity) spans 149-167 (PGASGPAGARGNDGATGAA). Positions 169-181 (PPGPTGPAGPPGF) are enriched in pro residues. The span at 215-254 (AGAAGPAGNPGADGQPGAKGANGAPGIAGAPGFPGARGPS) shows a compositional bias: low complexity. A 5-hydroxylysine modification is found at K266. 4-hydroxyproline is present on residues P272, P275, P287, P296, P311, P317, P326, and P332. Gly residues predominate over residues 321–330 (GERGGPGSRG). A 5-hydroxylysine modification is found at K341. Residues P350, P359, P365, P371, P380, P383, P392, P401, P407, P419, P429, P432, P450, P468, P474, P480, P486, P492, P498, P510, P526, P532, P538, and P547 each carry the 4-hydroxyproline modification. Residues 374-400 (KGLTGSPGSPGPDGKTGPPGPAGQDGR) show a composition bias toward low complexity. Low complexity predominate over residues 462–489 (QGPAGSPGFQGLPGPAGPPGEAGKPGEQ). Low complexity predominate over residues 522 to 535 (APGAPGSQGAPGLQ). Position 559 is a 5-hydroxylysine (K559). A 4-hydroxyproline mark is found at P565, P580, and P586. Residues 592–606 (SGPSGPAGPTGARGA) show a composition bias toward low complexity. S595 is subject to Phosphoserine. 4-hydroxyproline is present on residues P607, P613, P616, P625, P631, P649, P658, and P667. Positions 619-646 (AGFAGPPGADGQPGAKGEPGDAGAKGDA) are enriched in low complexity. Residues 648-660 (PPGPAGPTGPPGP) are compositionally biased toward pro residues. K670 is subject to 5-hydroxylysine. Low complexity predominate over residues 675–691 (SAGPPGATGFPGAAGRV). 2 positions are modified to 4-hydroxyproline: P679 and P685. P693 is modified (3-hydroxyproline). P694, P703, P706, P727, P736, P745, P754, P772, P781, P784, P790, P805, P811, P817, P826, and P832 each carry 4-hydroxyproline. The segment covering 720–729 (ETGPAGRPGE) has biased composition (low complexity). Residues 739-754 (SGEKGSPGADGPAGAP) are compositionally biased toward low complexity. Positions 804–814 (PPGPVGPPGLA) are enriched in pro residues. Residues 816–831 (PPGESGREGSPGAEGS) are compositionally biased toward low complexity. Residue K841 is modified to 5-hydroxylysine. A compositionally biased stretch (pro residues) spans 849–864 (PGPPGAPGAPGAPGPV). 4-hydroxyproline is present on residues P852, P855, and P858. Residues 885-899 (AGPAGARGPAGPQGP) are compositionally biased toward low complexity. The segment covering 900–914 (RGDKGETGEQGDRGI) has biased composition (basic and acidic residues). The residue at position 903 (K903) is a 5-hydroxylysine. A 5-hydroxylysine; alternate modification is found at K915. A glycan (O-linked (Gal...) hydroxylysine; alternate) is linked at K915. P930, P933, P951, and P966 each carry 4-hydroxyproline. The segment covering 933–966 (PGEQGPSGASGPAGPRGPPGSAGSPGKDGLNGLP) has biased composition (low complexity). 3-hydroxyproline is present on P971. The residue at position 972 (P972) is a 4-hydroxyproline. Residues 984–999 (VGPPGPPGPPGPPGPP) are compositionally biased toward pro residues. P986 bears the 3-hydroxyproline mark. A 4-hydroxyproline modification is found at P987. P989 bears the 3-hydroxyproline mark. P990 is subject to 4-hydroxyproline. Residue P992 is modified to 3-hydroxyproline. 3 positions are modified to 4-hydroxyproline: P993, P996, and P999.

This sequence belongs to the fibrillar collagen family. In terms of assembly, trimers of one alpha 2(I) and two alpha 1(I) chains. Post-translationally, contains mostly 4-hydroxyproline. Proline residues at the third position of the tripeptide repeating unit (G-X-Y) are hydroxylated in some or all of the chains. Contains 3-hydroxyproline at a few sites. This modification occurs on the first proline residue in the sequence motif Gly-Pro-Hyp, where Hyp is 4-hydroxyproline. In terms of processing, lysine residues at the third position of the tripeptide repeating unit (G-X-Y) are 5-hydroxylated in some or all of the chains. Post-translationally, O-glycosylated on hydroxylated lysine residues. The O-linked glycan consists of a Glc-Gal disaccharide. In terms of tissue distribution, expressed in bones.

Its subcellular location is the secreted. The protein resides in the extracellular space. The protein localises to the extracellular matrix. In terms of biological role, type I collagen is a member of group I collagen (fibrillar forming collagen). The polypeptide is Collagen alpha-1(I) chain (Choloepus hoffmanni (Hoffmann's two-fingered sloth)).